We begin with the raw amino-acid sequence, 396 residues long: Queuine tRNA-ribosyltransferase catalytic subunit 1 (396 aa).

Aspartate 99 (proton acceptor) is an active-site residue. Queuine-binding positions include aspartate 99 to phenylalanine 103, aspartate 153, glutamine 196, and glycine 223. Positions glycine 254 to aspartate 260 are RNA binding. The Nucleophile role is filled by aspartate 273. Positions threonine 278 to arginine 282 are RNA binding; important for wobble base 34 recognition. Cysteine 311, cysteine 313, cysteine 316, and histidine 341 together coordinate Zn(2+).

The protein belongs to the queuine tRNA-ribosyltransferase family. As to quaternary structure, heterodimer of a catalytic subunit qtrt1 and an accessory subunit qtrt2. It depends on Zn(2+) as a cofactor.

It is found in the cytoplasm. It localises to the mitochondrion outer membrane. It catalyses the reaction guanosine(34) in tRNA + queuine = queuosine(34) in tRNA + guanine. In terms of biological role, catalytic subunit of the queuine tRNA-ribosyltransferase (TGT) that catalyzes the base-exchange of a guanine (G) residue with queuine (Q) at position 34 (anticodon wobble position) in tRNAs with GU(N) anticodons (tRNA-Asp, -Asn, -His and -Tyr), resulting in the hypermodified nucleoside queuosine (7-(((4,5-cis-dihydroxy-2-cyclopenten-1-yl)amino)methyl)-7-deazaguanosine). Catalysis occurs through a double-displacement mechanism. The nucleophile active site attacks the C1' of nucleotide 34 to detach the guanine base from the RNA, forming a covalent enzyme-RNA intermediate. The proton acceptor active site deprotonates the incoming queuine, allowing a nucleophilic attack on the C1' of the ribose to form the product. This Xenopus laevis (African clawed frog) protein is Queuine tRNA-ribosyltransferase catalytic subunit 1.